We begin with the raw amino-acid sequence, 150 residues long: Transcriptional regulator MraZ (150 aa).

SpoVT-AbrB domains follow at residues 11 to 53 (TYTP…PFDE) and 82 to 125 (AVDQ…NKDT).

This sequence belongs to the MraZ family. As to quaternary structure, forms oligomers.

Its subcellular location is the cytoplasm. It is found in the nucleoid. This Bifidobacterium longum (strain NCC 2705) protein is Transcriptional regulator MraZ.